The chain runs to 381 residues: Diguanylate cyclase DosC (381 aa).

Heme is bound at residue H98. In terms of domain architecture, GGDEF spans 325 to 381 (TPLSVLIIDVDKFKEINDTWGHNTGDEILRKVSFLSQKRLVKSKILGAGSSRKLAVS). D333 serves as a coordination point for Mg(2+). The substrate site is built by N341 and D350.

Requires heme as cofactor. It depends on Mg(2+) as a cofactor.

It catalyses the reaction 2 GTP = 3',3'-c-di-GMP + 2 diphosphate. Its pathway is purine metabolism; 3',5'-cyclic di-GMP biosynthesis. Globin-coupled heme-based oxygen sensor protein displaying diguanylate cyclase (DGC) activity in response to oxygen availability. Thus, catalyzes the synthesis of cyclic diguanylate (c-di-GMP) via the condensation of 2 GTP molecules. Cyclic-di-GMP is a second messenger which controls cell surface-associated traits in bacteria. In Shigella flexneri serotype 5b (strain 8401), this protein is Diguanylate cyclase DosC (dosC).